Reading from the N-terminus, the 627-residue chain is Translation factor GUF1, mitochondrial (627 aa).

A mitochondrion-targeting transit peptide spans 1–16; sequence MSLAWSAGRAWSRQSY. Residues 40 to 221 form the tr-type G domain; that stretch reads ERYRNFCIVA…AVIERIPHPV (182 aa). Residues 49–56, 114–118, and 168–171 contribute to the GTP site; these read AHIDHGKS, DTPGH, and NKID.

The protein belongs to the TRAFAC class translation factor GTPase superfamily. Classic translation factor GTPase family. LepA subfamily.

The protein localises to the mitochondrion inner membrane. It carries out the reaction GTP + H2O = GDP + phosphate + H(+). In terms of biological role, promotes mitochondrial protein synthesis. May act as a fidelity factor of the translation reaction, by catalyzing a one-codon backward translocation of tRNAs on improperly translocated ribosomes. Binds to mitochondrial ribosomes in a GTP-dependent manner. The sequence is that of Translation factor GUF1, mitochondrial from Fusarium vanettenii (strain ATCC MYA-4622 / CBS 123669 / FGSC 9596 / NRRL 45880 / 77-13-4) (Fusarium solani subsp. pisi).